The chain runs to 229 residues: Lipoprotein-releasing system ATP-binding protein LolD (229 aa).

The region spanning 9-229 is the ABC transporter domain; the sequence is LRLEQVARRY…TIREGQIVPA (221 aa). 45-52 contributes to the ATP binding site; sequence APSGTGKS.

Belongs to the ABC transporter superfamily. Lipoprotein translocase (TC 3.A.1.125) family. In terms of assembly, the complex is composed of two ATP-binding proteins (LolD) and two transmembrane proteins (LolC and LolE).

The protein localises to the cell inner membrane. In terms of biological role, part of the ABC transporter complex LolCDE involved in the translocation of mature outer membrane-directed lipoproteins, from the inner membrane to the periplasmic chaperone, LolA. Responsible for the formation of the LolA-lipoprotein complex in an ATP-dependent manner. This chain is Lipoprotein-releasing system ATP-binding protein LolD, found in Granulibacter bethesdensis (strain ATCC BAA-1260 / CGDNIH1).